Consider the following 375-residue polypeptide: Trans-enoyl reductase BOA5 (375 aa).

Over residues 1–16 (MQAVIQTGPGTLQLTE) the composition is skewed to polar residues. Positions 1 to 21 (MQAVIQTGPGTLQLTENVPKP) are disordered. 42–45 (SDWK) is an NADP(+) binding site. 121–128 (VGIVTTGL) contributes to the substrate binding site. Residues 147 to 168 (GSAAPQKTRVGPRGWSGGDALT) are disordered. Residues 185–188 (STST), 208–211 (SPHN), tyrosine 226, and 273–274 (LD) each bind NADP(+). 294-298 (ALTIF) provides a ligand contact to substrate. 363-364 (VS) serves as a coordination point for NADP(+).

This sequence belongs to the zinc-containing alcohol dehydrogenase family. Monomer.

It participates in polyketide biosynthesis. In terms of biological role, trans-enoyl reductase; part of the gene cluster A that mediates the biosynthesis of botcinic acid and its botcinin derivatives, acetate-derived polyketides that contribute to virulence when combined with the sesquiterpene botrydial. Botcinic acid and its derivatives have been shown to induce chlorosis and necrosis during host plant infection, but also have antifungal activities. Two polyketide synthases, BOA6 and BOA9, are involved in the biosynthesis of botcinins. BOA6 mediates the formation of the per-methylated tetraketide core by condensation of four units of malonyl-CoA with one unit of acetyl-CoA, which would be methylated in activated methylene groups to yield a bicyclic acid intermediate that could then either be converted to botrylactone derivatives or lose the starter acetate unit through a retro-Claisen type C-C bond cleavage to yield botcinin derivatives. The second polyketide synthase, BOA9, is probably required for the biosynthesis of the tetraketide side chain of botcinins. The methyltransferase (MT) domain within BOA6 is probably responsible for the incorporation of four methyl groups. The trans-enoyl reductase BOA5 might take over the enoyl reductase function of BOA6 that misses an ER domain. The monooxygenases BOA2, BOA3 and BOA4 might be involved in further hydroxylations at C4, C5 and C8, whereas BOA7, close to BOA9, could potentially be involved in the hydroxylation at C4 in the side chain of botcinins. In Botryotinia fuckeliana (strain B05.10) (Noble rot fungus), this protein is Trans-enoyl reductase BOA5.